A 548-amino-acid polypeptide reads, in one-letter code: Asparagine--tRNA ligase, cytoplasmic (548 aa).

A disordered region spans residues 1–25; it reads MVLAELYVSDREGSDATGDGTKEKP. Positions 8–25 are enriched in basic and acidic residues; sequence VSDREGSDATGDGTKEKP. Residue Ser61 is modified to Phosphoserine. The tract at residues 69–91 is disordered; that stretch reads MWHREQMKSESREKKEAEDSLRR. The span at 71–91 shows a compositional bias: basic and acidic residues; that stretch reads HREQMKSESREKKEAEDSLRR. An N6-acetyllysine modification is found at Lys244. Ser482 is subject to Phosphoserine. Position 490 is an N6-acetyllysine (Lys490).

It belongs to the class-II aminoacyl-tRNA synthetase family. As to quaternary structure, homodimer.

Its subcellular location is the cytoplasm. It carries out the reaction tRNA(Asn) + L-asparagine + ATP = L-asparaginyl-tRNA(Asn) + AMP + diphosphate + H(+). In terms of biological role, catalyzes the attachment of asparagine to tRNA(Asn) in a two-step reaction: asparagine is first activated by ATP to form Asn-AMP and then transferred to the acceptor end of tRNA(Asn). In addition to its essential role in protein synthesis, acts as a signaling molecule that induced migration of CCR3-expressing cells. Has an essential role in the development of the cerebral cortex, being required for proper proliferation of radial glial cells. The sequence is that of Asparagine--tRNA ligase, cytoplasmic from Homo sapiens (Human).